Here is a 198-residue protein sequence, read N- to C-terminus: UPF0098 protein PH1269 (198 aa).

This sequence belongs to the UPF0098 family.

The sequence is that of UPF0098 protein PH1269 from Pyrococcus horikoshii (strain ATCC 700860 / DSM 12428 / JCM 9974 / NBRC 100139 / OT-3).